The chain runs to 403 residues: MVTSTVKLEEVRRMQRAEGMAAVLAIGTATPANCVYQTDYPDYYFRVTNSEHLTNLKERFQRMCESSQIRKRYTHLTEEILQENPSMCVFTAPSLDARQDMVVAEVPKLGKAAAEEAIKEWGQPMSRITHLVFCTTNGVDMPGADYQVAKMLGLPTSVKRLMMYQQGCFAGGTVLRVAKDLAENNRGARVLVVCSEIMAMAFRGPSESHLDSLVGHALFGDGAAAVIVGSDPDEAADERPLFQIVSASQTILPGTEDAIVGHLREVGLTFHLPKDVPEFISDSVEGALTDAFMPLGVHDWNSIFWVVHPGGPAILDQVEEKVALHKARMRASRNVLSEYGNMASATVLFVLDEMRKLSADDGHATTGEGMDWGVLFGFGPGLTVETIVLHSVPITAAAPLIMQ.

Residue 59-66 participates in CoA binding; sequence RFQRMCES. The active-site Acyl-thioester intermediate is the Cys168. Residue 220–221 participates in substrate binding; sequence GD. Ala313 contributes to the CoA binding site.

Belongs to the thiolase-like superfamily. Chalcone/stilbene synthases family. Homodimer.

The catalysed reaction is (E)-4-coumaroyl-CoA + 3 malonyl-CoA + 3 H(+) = 2',4,4',6'-tetrahydroxychalcone + 3 CO2 + 4 CoA. It functions in the pathway secondary metabolite biosynthesis; flavonoid biosynthesis. Its function is as follows. The primary product of this enzyme is 4,2',4',6'-tetrahydroxychalcone (also termed naringenin-chalcone or chalcone) which can under specific conditions spontaneously isomerize into naringenin. This is Chalcone synthase 2 (CHS2) from Oryza sativa subsp. japonica (Rice).